The chain runs to 871 residues: Ubiquitin carboxyl-terminal hydrolase 8 (871 aa).

The 96-residue stretch at 4–99 folds into the DUSP domain; sequence TSPDESPDST…GETGEASVSG (96 aa). Residues 279–869 enclose the USP domain; that stretch reads TGLQNLGNTC…AAYVLFYKRL (591 aa). Catalysis depends on Cys288, which acts as the Nucleophile. A disordered region spans residues 615-650; sequence ENLENPTEEEATDKTDTDGTTSVEDTNSTDVKETTE. The active-site Proton acceptor is the His828.

This sequence belongs to the peptidase C19 family.

It carries out the reaction Thiol-dependent hydrolysis of ester, thioester, amide, peptide and isopeptide bonds formed by the C-terminal Gly of ubiquitin (a 76-residue protein attached to proteins as an intracellular targeting signal).. In terms of biological role, recognizes and hydrolyzes the peptide bond at the C-terminal Gly of ubiquitin. Involved in the processing of poly-ubiquitin precursors as well as that of ubiquitinated proteins. In Arabidopsis thaliana (Mouse-ear cress), this protein is Ubiquitin carboxyl-terminal hydrolase 8 (UBP8).